A 430-amino-acid chain; its full sequence is Adenylosuccinate synthetase (430 aa).

GTP-binding positions include 12 to 18 and 40 to 42; these read GDEGKGK and GHT. Catalysis depends on Asp-13, which acts as the Proton acceptor. 2 residues coordinate Mg(2+): Asp-13 and Gly-40. Residues 13–16, 38–41, Thr-130, Arg-144, Gln-224, Thr-239, and Arg-303 contribute to the IMP site; these read DEGK and NAGH. The Proton donor role is filled by His-41. 299-305 is a binding site for substrate; sequence TVTGRKR. GTP-binding positions include Arg-305, 331–333, and 413–415; these read KLD and STS.

This sequence belongs to the adenylosuccinate synthetase family. In terms of assembly, homodimer. Requires Mg(2+) as cofactor.

The protein resides in the cytoplasm. The enzyme catalyses IMP + L-aspartate + GTP = N(6)-(1,2-dicarboxyethyl)-AMP + GDP + phosphate + 2 H(+). Its pathway is purine metabolism; AMP biosynthesis via de novo pathway; AMP from IMP: step 1/2. Its function is as follows. Plays an important role in the de novo pathway of purine nucleotide biosynthesis. Catalyzes the first committed step in the biosynthesis of AMP from IMP. This is Adenylosuccinate synthetase from Cereibacter sphaeroides (strain ATCC 17025 / ATH 2.4.3) (Rhodobacter sphaeroides).